Reading from the N-terminus, the 443-residue chain is Chromosomal replication initiator protein DnaA (443 aa).

The interval 1 to 80 (MFLEEKLNLV…ETCGDKIPVE (80 aa)) is domain I, interacts with DnaA modulators. Residues 80-104 (EILIETKAASPLQSILEKSFDQKDF) are domain II. Residues 105-321 (QFNPDYTFET…GALNDIYLYK (217 aa)) form a domain III, AAA+ region region. Residues Gly-148, Gly-150, Lys-151, and Thr-152 each contribute to the ATP site. Residues 322–443 (KSYSLLFLNL…ERISSKYKLQ (122 aa)) form a domain IV, binds dsDNA region.

Belongs to the DnaA family. As to quaternary structure, oligomerizes as a right-handed, spiral filament on DNA at oriC.

The protein localises to the cytoplasm. Functionally, plays an essential role in the initiation and regulation of chromosomal replication. ATP-DnaA binds to the origin of replication (oriC) to initiate formation of the DNA replication initiation complex once per cell cycle. Binds the DnaA box (a 9 base pair repeat at the origin) and separates the double-stranded (ds)DNA. Forms a right-handed helical filament on oriC DNA; dsDNA binds to the exterior of the filament while single-stranded (ss)DNA is stabiized in the filament's interior. The ATP-DnaA-oriC complex binds and stabilizes one strand of the AT-rich DNA unwinding element (DUE), permitting loading of DNA polymerase. After initiation quickly degrades to an ADP-DnaA complex that is not apt for DNA replication. Binds acidic phospholipids. The chain is Chromosomal replication initiator protein DnaA from Leptospira interrogans serogroup Icterohaemorrhagiae serovar copenhageni (strain Fiocruz L1-130).